The sequence spans 156 residues: Transcription antitermination protein NusB (156 aa).

The protein belongs to the NusB family.

Involved in transcription antitermination. Required for transcription of ribosomal RNA (rRNA) genes. Binds specifically to the boxA antiterminator sequence of the ribosomal RNA (rrn) operons. This is Transcription antitermination protein NusB from Rickettsia massiliae (strain Mtu5).